A 194-amino-acid chain; its full sequence is Imidazoleglycerol-phosphate dehydratase (194 aa).

It belongs to the imidazoleglycerol-phosphate dehydratase family.

It localises to the cytoplasm. The catalysed reaction is D-erythro-1-(imidazol-4-yl)glycerol 3-phosphate = 3-(imidazol-4-yl)-2-oxopropyl phosphate + H2O. It functions in the pathway amino-acid biosynthesis; L-histidine biosynthesis; L-histidine from 5-phospho-alpha-D-ribose 1-diphosphate: step 6/9. In Ruminiclostridium cellulolyticum (strain ATCC 35319 / DSM 5812 / JCM 6584 / H10) (Clostridium cellulolyticum), this protein is Imidazoleglycerol-phosphate dehydratase.